A 508-amino-acid chain; its full sequence is Dihydroniloticin synthase CYP71CD4 (508 aa).

A helical transmembrane segment spans residues 6–26 (LDFFSVTSFIIFFLFLFRLVW). Heme is bound at residue cysteine 449.

This sequence belongs to the cytochrome P450 family. Requires heme as cofactor. Mainly expressed in roots and, to a lesser extent, in stems.

Its subcellular location is the membrane. The enzyme catalyses tirucalla-7,24-dien-3beta-ol + 2 reduced [NADPH--hemoprotein reductase] + 2 O2 = dihydroniloticin + 2 oxidized [NADPH--hemoprotein reductase] + 2 H2O + 2 H(+). It functions in the pathway secondary metabolite biosynthesis; terpenoid biosynthesis. Its function is as follows. Monooxygenase involved in the biosynthesis of quassinoids triterpene natural products such as ailanthone, chaparrinone, glaucarubinone and amarolide, allelopathic degraded triterpene lactones inhibiting the growth of other plants, and possessing antimalarial, antifeedant, insecticidal, anti-inflammatory and anticancer activities. Catalyzes the conversion of tirucalladienol to dihydroniloticin. This chain is Dihydroniloticin synthase CYP71CD4, found in Ailanthus altissima (Tree-of-heaven).